The chain runs to 407 residues: Nuclear hormone receptor family member nhr-134 (407 aa).

An NR C4-type zinc finger spans residues 11 to 31 (CEICGQKTSGRHFGVMSCRSC). The NR C4-type; degenerate zinc finger occupies 47–66 (RCPNGNCKLLENGKFKCKKC). Positions 157 to 407 (QFHNSLERLA…FSEPDMFEST (251 aa)) constitute an NR LBD domain.

Belongs to the nuclear hormone receptor family.

It is found in the nucleus. Functionally, orphan nuclear receptor. This chain is Nuclear hormone receptor family member nhr-134 (nhr-134), found in Caenorhabditis elegans.